Here is a 106-residue protein sequence, read N- to C-terminus: Putative membrane protein insertion efficiency factor (106 aa).

This sequence belongs to the UPF0161 family.

Its subcellular location is the cell inner membrane. Its function is as follows. Could be involved in insertion of integral membrane proteins into the membrane. The sequence is that of Putative membrane protein insertion efficiency factor from Acinetobacter baylyi (strain ATCC 33305 / BD413 / ADP1).